The primary structure comprises 242 residues: 3-deoxy-manno-octulosonate cytidylyltransferase (242 aa).

It belongs to the KdsB family.

It is found in the cytoplasm. It catalyses the reaction 3-deoxy-alpha-D-manno-oct-2-ulosonate + CTP = CMP-3-deoxy-beta-D-manno-octulosonate + diphosphate. Its pathway is nucleotide-sugar biosynthesis; CMP-3-deoxy-D-manno-octulosonate biosynthesis; CMP-3-deoxy-D-manno-octulosonate from 3-deoxy-D-manno-octulosonate and CTP: step 1/1. The protein operates within bacterial outer membrane biogenesis; lipopolysaccharide biosynthesis. Activates KDO (a required 8-carbon sugar) for incorporation into bacterial lipopolysaccharide in Gram-negative bacteria. This is 3-deoxy-manno-octulosonate cytidylyltransferase from Anaeromyxobacter dehalogenans (strain 2CP-C).